The chain runs to 2559 residues: Stabilin-2 (2559 aa).

A signal peptide spans 1-28 (MARSKLLLGKLLPLILIFLGLLVQNACS). The Extracellular portion of the chain corresponds to 29 to 2464 (PTEAPELTKR…PPTAATAAHS (2436 aa)). Asn71 is a glycosylation site (N-linked (GlcNAc...) asparagine). 5 consecutive EGF-like domains span residues 116-156 (DCME…TACE), 164-201 (FGPN…PRCD), 203-244 (PIPE…QTCK), 245-284 (PINP…QVCL), and 330-370 (MTDI…LNCY). 3 cysteine pairs are disulfide-bonded: Cys120–Cys134, Cys128–Cys144, and Cys146–Cys155. N-linked (GlcNAc...) asparagine glycosylation occurs at Asn167. Disulfide bonds link Cys168–Cys179, Cys172–Cys189, Cys191–Cys200, Cys207–Cys218, Cys212–Cys230, Cys232–Cys243, Cys249–Cys260, Cys254–Cys270, Cys272–Cys283, Cys334–Cys346, Cys340–Cys356, and Cys358–Cys369. A glycan (N-linked (GlcNAc...) asparagine) is linked at Asn345. FAS1 domains follow at residues 379 to 512 (ELNT…DRAM) and 522 to 659 (NPQQ…TGVL). N-linked (GlcNAc...) asparagine glycosylation is found at Asn572, Asn626, Asn673, and Asn691. Residues 743 to 783 (DCNPCPGGFMNPCSGNGQCIDGLGGNGTCICEDGFQGSRCQ) enclose the EGF-like 6 domain. Cystine bridges form between Cys747/Cys761, Cys755/Cys771, and Cys773/Cys782. N-linked (GlcNAc...) asparagine glycosylation occurs at Asn768. A glycan (N-linked (GlcNAc...) asparagine) is linked at Asn796. EGF-like domains are found at residues 833–873 (QTSA…TLCS), 874–917 (KKDP…RDCV), 918–960 (EINS…IDCE), and 961–1002 (PIIS…VLCY). Intrachain disulfides connect Cys837-Cys850, Cys844-Cys859, Cys861-Cys872, Cys878-Cys893, Cys887-Cys903, Cys905-Cys916, Cys922-Cys936, Cys930-Cys946, Cys948-Cys959, Cys965-Cys978, Cys972-Cys988, and Cys990-Cys1001. N-linked (GlcNAc...) asparagine glycosylation is present at Asn854. N-linked (GlcNAc...) asparagine glycosylation is present at Asn933. 2 consecutive FAS1 domains span residues 1002–1135 (YGNV…NKVL) and 1145–1273 (LPSL…EKVL). Residues Asn1024, Asn1036, Asn1108, Asn1255, and Asn1283 are each glycosylated (N-linked (GlcNAc...) asparagine). Residues 1350 to 1415 (PQCQACPGKG…CSCVHGRCNQ (66 aa)) form the Laminin EGF-like 1 domain. Disulfide bonds link Cys1355–Cys1369, Cys1363–Cys1379, Cys1381–Cys1390, Cys1402–Cys1413, Cys1406–Cys1423, Cys1425–Cys1434, Cys1443–Cys1453, Cys1447–Cys1463, Cys1465–Cys1476, Cys1482–Cys1495, Cys1489–Cys1505, Cys1507–Cys1518, Cys1524–Cys1537, Cys1531–Cys1547, Cys1549–Cys1560, Cys1566–Cys1579, Cys1573–Cys1589, and Cys1591–Cys1602. N-linked (GlcNAc...) asparagine glycans are attached at residues Asn1374 and Asn1386. EGF-like domains lie at 1439-1477 (TTDN…TVCT), 1478-1519 (AINA…IVCL), 1520-1561 (EINP…KVCT), and 1562-1603 (LINV…IVCR). Asn1444 carries an N-linked (GlcNAc...) asparagine glycan. An N-linked (GlcNAc...) asparagine glycan is attached at Asn1472. The N-linked (GlcNAc...) asparagine glycan is linked to Asn1580. FAS1 domains are found at residues 1603 to 1731 (RGSI…DTLL) and 1747 to 1888 (VLLN…DCLL). Asn1750 carries an N-linked (GlcNAc...) asparagine glycan. In terms of domain architecture, Laminin EGF-like 2 spans 1965 to 2030 (PDCQACPGGP…GCSEHGQCDE (66 aa)). 17 disulfides stabilise this stretch: Cys1970-Cys1984, Cys1978-Cys1994, Cys1996-Cys2005, Cys2017-Cys2028, Cys2022-Cys2038, Cys2040-Cys2049, Cys2059-Cys2069, Cys2063-Cys2075, Cys2077-Cys2088, Cys2094-Cys2107, Cys2101-Cys2116, Cys2118-Cys2129, Cys2135-Cys2149, Cys2143-Cys2159, Cys2161-Cys2172, Cys2228-Cys2296, and Cys2252-Cys2273. Asn2001 carries an N-linked (GlcNAc...) asparagine glycan. EGF-like domains are found at residues 2055–2089 (VIPV…ITCT), 2090–2130 (VVDF…HSCT), and 2131–2173 (EIDP…RDCE). Residue Asn2072 is glycosylated (N-linked (GlcNAc...) asparagine). One can recognise a Link domain in the interval 2206-2298 (GVFHLRSPLG…SEMWDVFCYR (93 aa)). N-linked (GlcNAc...) asparagine glycans are attached at residues Asn2287, Asn2303, Asn2375, Asn2391, and Asn2400. The FAS1 7 domain occupies 2318-2452 (NGNLLQVLMS…GVLHIISEPL (135 aa)). A helical transmembrane segment spans residues 2465–2485 (GLGTGIFCAVVLVTGAIALAA). The Cytoplasmic segment spans residues 2486 to 2559 (YSYFRLNQRT…NSDPLGALRS (74 aa)). Ser2503 is modified (phosphoserine). The tract at residues 2510–2520 (LAFGKQQPESI) is interaction with TMSB4X. The tract at residues 2514-2559 (KQQPESITNPLYETSTPAAPEPSCDPFTDSGERELENSDPLGALRS) is disordered. Residues 2516–2530 (QPESITNPLYETSTP) are compositionally biased toward polar residues.

Interacts with heparin, alpha-M/beta-2 integrin (ITGAM and ITGB2), and thymosin beta 4 (TMSB4X). Interacts with GULP1. Associates with clathrin and adapter protein AP-2; in liver sinusoidal endothelial cells (LSECs). In terms of processing, glycosylated. Post-translationally, proteolytically processed to yield a smaller protein. As to expression, expressed in endothelial sinuses of liver, lymph nodes, bone marrow, spleen and in specialised structures of eye, heart, brain and kidney. Expression is detected in corneal and lens epithelium, in mesenchymal cells of the heart valves, in the ependymal cells lining the ventricles in the brain, and in the prismatic epithelial cells covering the renal papillae.

The protein resides in the cytoplasm. The protein localises to the cell membrane. Its function is as follows. Phosphatidylserine receptor that enhances the engulfment of apoptotic cells. Hyaluronan receptor that binds to and mediates endocytosis of hyaluronic acid (HA). Also acts, in different species, as a primary systemic scavenger receptor for heparin (Hep), chondroitin sulfate (CS), dermatan sulfate (DS), nonglycosaminoglycan (GAG), acetylated low-density lipoprotein (AcLDL), pro-collagen propeptides and advanced glycation end products (AGE). May serve to maintain tissue integrity by supporting extracellular matrix turnover or it may contribute to maintaining fluidity of bodily liquids by resorption of hyaluronan. Counter receptor which plays an important role in lymphocyte recruitment in the hepatic vasculature. Binds to both Gram-positive and Gram-negative bacteria and may play a role in defense against bacterial infection. The proteolytically processed short form also functions as an endocytosis receptor for heparin internalization as well as HA and CS. The chain is Stabilin-2 from Mus musculus (Mouse).